Reading from the N-terminus, the 38-residue chain is Large ribosomal subunit protein bL36 (38 aa).

It belongs to the bacterial ribosomal protein bL36 family.

The protein is Large ribosomal subunit protein bL36 of Alcanivorax borkumensis (strain ATCC 700651 / DSM 11573 / NCIMB 13689 / SK2).